A 483-amino-acid chain; its full sequence is Bromoperoxidase-catalase (483 aa).

The tract at residues methionine 1 to glycine 24 is disordered. Residues histidine 54 and asparagine 127 contribute to the active site. Residue tyrosine 337 coordinates heme.

This sequence belongs to the catalase family.

It catalyses the reaction 2 H2O2 = O2 + 2 H2O. This is Bromoperoxidase-catalase (bca) from Streptomyces venezuelae (strain ATCC 10712 / CBS 650.69 / DSM 40230 / JCM 4526 / NBRC 13096 / PD 04745).